Consider the following 386-residue polypeptide: Diaminopimelate decarboxylase (386 aa).

K49 is modified (N6-(pyridoxal phosphate)lysine). Pyridoxal 5'-phosphate-binding positions include G228 and 266 to 269 (ELGR). Substrate contacts are provided by R269, R305, Y309, E335, and Y363. Residue Y363 participates in pyridoxal 5'-phosphate binding.

Belongs to the Orn/Lys/Arg decarboxylase class-II family. LysA subfamily. In terms of assembly, homodimer. Pyridoxal 5'-phosphate serves as cofactor.

It carries out the reaction meso-2,6-diaminopimelate + H(+) = L-lysine + CO2. It functions in the pathway amino-acid biosynthesis; L-lysine biosynthesis via DAP pathway; L-lysine from DL-2,6-diaminopimelate: step 1/1. Functionally, specifically catalyzes the decarboxylation of meso-diaminopimelate (meso-DAP) to L-lysine. The sequence is that of Diaminopimelate decarboxylase from Bacteroides thetaiotaomicron (strain ATCC 29148 / DSM 2079 / JCM 5827 / CCUG 10774 / NCTC 10582 / VPI-5482 / E50).